We begin with the raw amino-acid sequence, 420 residues long: Gamma-glutamyl phosphate reductase (420 aa).

The protein belongs to the gamma-glutamyl phosphate reductase family.

It is found in the cytoplasm. The catalysed reaction is L-glutamate 5-semialdehyde + phosphate + NADP(+) = L-glutamyl 5-phosphate + NADPH + H(+). The protein operates within amino-acid biosynthesis; L-proline biosynthesis; L-glutamate 5-semialdehyde from L-glutamate: step 2/2. Catalyzes the NADPH-dependent reduction of L-glutamate 5-phosphate into L-glutamate 5-semialdehyde and phosphate. The product spontaneously undergoes cyclization to form 1-pyrroline-5-carboxylate. This chain is Gamma-glutamyl phosphate reductase, found in Alkalilimnicola ehrlichii (strain ATCC BAA-1101 / DSM 17681 / MLHE-1).